Reading from the N-terminus, the 1031-residue chain is GTPase activating protein Gyp51 (1031 aa).

Residues 1 to 32 (MAFTEANEREVQSSYEKENVKIIREEEAKDQE) show a composition bias toward basic and acidic residues. Disordered regions lie at residues 1–229 (MAFT…TNVN), 278–317 (FIEQNGPNSDTVSGFKETSSIVNSSSTTEKPGVALDSQND), 339–371 (DHLPENVESEPVAGKENETAKNESGASDNDHKA), 420–459 (NDELSASGSQEPHPKDGTNSTSSLPLDTNNLSNSEPPSHV), and 490–520 (KKNTAFSPGTSLSTNHVKTKSRSAHNNSTSP). The segment covering 43 to 59 (TGTSPDLNFFSTQNVMQ) has biased composition (polar residues). Positions 62 to 78 (FEDEYSEFSNEDDEAEI) are enriched in acidic residues. Polar residues predominate over residues 105–117 (SQQSVEEQNNTTN). Positions 195–217 (EDLKDEVKSVHEFNEPNDLRQQE) are enriched in basic and acidic residues. Over residues 219–229 (SYSDDDDTNVN) the composition is skewed to acidic residues. Over residues 278-306 (FIEQNGPNSDTVSGFKETSSIVNSSSTTE) the composition is skewed to polar residues. 3 stretches are compositionally biased toward polar residues: residues 420 to 429 (NDELSASGSQ), 436 to 455 (GTNSTSSLPLDTNNLSNSEP), and 493 to 505 (TAFSPGTSLSTNH). The Rab-GAP TBC domain maps to 610-806 (HNSHTVHTVV…HLYDILFLYG (197 aa)). The helical transmembrane segment at 798–818 (LYDILFLYGPGILFNFGLALL) threads the bilayer.

It belongs to the GYP5 family.

The protein localises to the membrane. It is found in the cytoplasm. Its function is as follows. GTPase-activating protein involved in ER to Golgi trafficking and polarized exocytosis. The polypeptide is GTPase activating protein Gyp51 (gyp51) (Schizosaccharomyces pombe (strain 972 / ATCC 24843) (Fission yeast)).